Reading from the N-terminus, the 315-residue chain is Putative 2-hydroxyacid dehydrogenase HI_1556 (315 aa).

Residues Thr-73, 156-157 (CL), 231-233 (TGR), and Asp-257 each bind NAD(+). The active site involves Arg-233. Glu-262 is an active-site residue. Residue His-285 is the Proton donor of the active site. 285–288 (HIAW) contacts NAD(+).

Belongs to the D-isomer specific 2-hydroxyacid dehydrogenase family.

In Haemophilus influenzae (strain ATCC 51907 / DSM 11121 / KW20 / Rd), this protein is Putative 2-hydroxyacid dehydrogenase HI_1556.